We begin with the raw amino-acid sequence, 346 residues long: Biotin synthase (346 aa).

The Radical SAM core domain occupies 38–256 (RQVQVSTLLS…IAVARIMMPT (219 aa)). The [4Fe-4S] cluster site is built by Cys53, Cys57, and Cys60. [2Fe-2S] cluster-binding residues include Cys97, Cys128, Cys188, and Arg260.

Belongs to the radical SAM superfamily. Biotin synthase family. In terms of assembly, homodimer. The cofactor is [4Fe-4S] cluster. Requires [2Fe-2S] cluster as cofactor.

The catalysed reaction is (4R,5S)-dethiobiotin + (sulfur carrier)-SH + 2 reduced [2Fe-2S]-[ferredoxin] + 2 S-adenosyl-L-methionine = (sulfur carrier)-H + biotin + 2 5'-deoxyadenosine + 2 L-methionine + 2 oxidized [2Fe-2S]-[ferredoxin]. Its pathway is cofactor biosynthesis; biotin biosynthesis; biotin from 7,8-diaminononanoate: step 2/2. Functionally, catalyzes the conversion of dethiobiotin (DTB) to biotin by the insertion of a sulfur atom into dethiobiotin via a radical-based mechanism. The chain is Biotin synthase from Shigella flexneri serotype 5b (strain 8401).